Reading from the N-terminus, the 592-residue chain is Arginine--tRNA ligase (592 aa).

The short motif at 139-149 (ANPNGPLHIGH) is the 'HIGH' region element.

The protein belongs to the class-I aminoacyl-tRNA synthetase family.

Its subcellular location is the cytoplasm. The catalysed reaction is tRNA(Arg) + L-arginine + ATP = L-arginyl-tRNA(Arg) + AMP + diphosphate. The protein is Arginine--tRNA ligase of Methanopyrus kandleri (strain AV19 / DSM 6324 / JCM 9639 / NBRC 100938).